A 388-amino-acid polypeptide reads, in one-letter code: 4-hydroxy-3-methylbut-2-en-1-yl diphosphate synthase (flavodoxin) (388 aa).

4 residues coordinate [4Fe-4S] cluster: Cys-281, Cys-284, Cys-316, and Glu-323.

Belongs to the IspG family. [4Fe-4S] cluster serves as cofactor.

The catalysed reaction is (2E)-4-hydroxy-3-methylbut-2-enyl diphosphate + oxidized [flavodoxin] + H2O + 2 H(+) = 2-C-methyl-D-erythritol 2,4-cyclic diphosphate + reduced [flavodoxin]. Its pathway is isoprenoid biosynthesis; isopentenyl diphosphate biosynthesis via DXP pathway; isopentenyl diphosphate from 1-deoxy-D-xylulose 5-phosphate: step 5/6. Converts 2C-methyl-D-erythritol 2,4-cyclodiphosphate (ME-2,4cPP) into 1-hydroxy-2-methyl-2-(E)-butenyl 4-diphosphate. In Pseudarthrobacter chlorophenolicus (strain ATCC 700700 / DSM 12829 / CIP 107037 / JCM 12360 / KCTC 9906 / NCIMB 13794 / A6) (Arthrobacter chlorophenolicus), this protein is 4-hydroxy-3-methylbut-2-en-1-yl diphosphate synthase (flavodoxin).